Reading from the N-terminus, the 118-residue chain is Large ribosomal subunit protein uL22 (118 aa).

The protein belongs to the universal ribosomal protein uL22 family. In terms of assembly, part of the 50S ribosomal subunit.

In terms of biological role, this protein binds specifically to 23S rRNA; its binding is stimulated by other ribosomal proteins, e.g. L4, L17, and L20. It is important during the early stages of 50S assembly. It makes multiple contacts with different domains of the 23S rRNA in the assembled 50S subunit and ribosome. The globular domain of the protein is located near the polypeptide exit tunnel on the outside of the subunit, while an extended beta-hairpin is found that lines the wall of the exit tunnel in the center of the 70S ribosome. The protein is Large ribosomal subunit protein uL22 of Pediococcus pentosaceus (strain ATCC 25745 / CCUG 21536 / LMG 10740 / 183-1w).